We begin with the raw amino-acid sequence, 1762 residues long: ADAMTS-like protein 1 (1762 aa).

A signal peptide spans Met1–Ser28. In terms of domain architecture, TSP type-1 1 spans Asp33–Pro82. Residues Trp39 and Trp42 are each glycosylated (C-linked (Man) tryptophan). Cystine bridges form between Cys45–Cys76, Cys49–Cys81, and Cys60–Cys66. Thr48 carries O-linked (Fuc...) threonine glycosylation. Asn251 is a glycosylation site (N-linked (GlcNAc...) asparagine). O-linked (Fuc...) threonine glycosylation is present at Thr312. 6 consecutive TSP type-1 domains span residues Pro376 to Pro424, Asp436 to Tyr493, Glu522 to Ser584, Glu607 to Pro665, Cys666 to Pro729, and Cys788 to Ala850. Ser391 carries an O-linked (Fuc...) serine glycan. An O-linked (Fuc...) threonine glycan is attached at Thr451. Cystine bridges form between Cys534/Cys578, Cys538/Cys583, and Cys549/Cys567. 7 disulfides stabilise this stretch: Cys678/Cys723, Cys682/Cys728, Cys693/Cys712, Cys800/Cys844, Cys804/Cys849, Cys815/Cys832, and Cys899/Cys947. The 103-residue stretch at Pro861–Gly963 folds into the Ig-like C2-type 1 domain. The disordered stretch occupies residues Leu1120–Pro1164. Over residues Ser1139–Gly1151 the composition is skewed to low complexity. Ig-like C2-type domains are found at residues Pro1164 to Thr1266, Pro1286 to Leu1369, and Pro1395 to Val1485. 3 disulfides stabilise this stretch: Cys1202–Cys1250, Cys1308–Cys1353, and Cys1418–Cys1469. 2 consecutive TSP type-1 domains span residues Cys1545–Val1608 and Cys1666–Glu1726. The PLAC domain occupies Glu1726–Ala1762.

In terms of assembly, monomer. In terms of processing, C-, N- and O-glycosylated. O-fucosylated by POFUT2 on a serine or a threonine residue found within the consensus sequence C1-X(2)-(S/T)-C2-G of the TSP type-1 repeat domains where C1 and C2 are the first and second cysteine residue of the repeat, respectively. Fucosylated repeats can then be further glycosylated by the addition of a beta-1,3-glucose residue by the glucosyltransferase, B3GALTL. Fucosylation mediates the efficient secretion of ADAMTSL1. Can also be C-glycosylated with one or two mannose molecules on tryptophan residues within the consensus sequence W-X-X-W of the TPRs, and N-glycosylated. These other glycosylations can also facilitate secretion. Disulfide bonds are present. Expressed primarily in adult skeletal muscle.

The protein resides in the secreted. It is found in the extracellular space. It localises to the extracellular matrix. This Homo sapiens (Human) protein is ADAMTS-like protein 1 (ADAMTSL1).